Reading from the N-terminus, the 122-residue chain is MIQQETRLKVADNSGAREVLTIKVLGGSGRKTANIGDIIVCTVKNATPGGVVKKGDVVKAVVVRTKSGVRREDGSYIKFDENACVIIRDDKGPRGTRIFGPVARELREGNFMKIVSLAPEVL.

The protein belongs to the universal ribosomal protein uL14 family. Part of the 50S ribosomal subunit. Forms a cluster with proteins L3 and L19. In the 70S ribosome, L14 and L19 interact and together make contacts with the 16S rRNA in bridges B5 and B8.

Its function is as follows. Binds to 23S rRNA. Forms part of two intersubunit bridges in the 70S ribosome. The protein is Large ribosomal subunit protein uL14 of Staphylococcus epidermidis (strain ATCC 35984 / DSM 28319 / BCRC 17069 / CCUG 31568 / BM 3577 / RP62A).